Consider the following 251-residue polypeptide: Aspartate/glutamate leucyltransferase (251 aa).

It belongs to the R-transferase family. Bpt subfamily.

Its subcellular location is the cytoplasm. It carries out the reaction N-terminal L-glutamyl-[protein] + L-leucyl-tRNA(Leu) = N-terminal L-leucyl-L-glutamyl-[protein] + tRNA(Leu) + H(+). The catalysed reaction is N-terminal L-aspartyl-[protein] + L-leucyl-tRNA(Leu) = N-terminal L-leucyl-L-aspartyl-[protein] + tRNA(Leu) + H(+). Functions in the N-end rule pathway of protein degradation where it conjugates Leu from its aminoacyl-tRNA to the N-termini of proteins containing an N-terminal aspartate or glutamate. The protein is Aspartate/glutamate leucyltransferase of Stenotrophomonas maltophilia (strain K279a).